Consider the following 355-residue polypeptide: Peptide chain release factor 1 (355 aa).

N5-methylglutamine is present on glutamine 233.

It belongs to the prokaryotic/mitochondrial release factor family. Methylated by PrmC. Methylation increases the termination efficiency of RF1.

It is found in the cytoplasm. Peptide chain release factor 1 directs the termination of translation in response to the peptide chain termination codons UAG and UAA. The polypeptide is Peptide chain release factor 1 (Bacillus anthracis).